Consider the following 490-residue polypeptide: Dual specificity protein kinase CLK3 (490 aa).

The segment at 1 to 138 (MHHCKRYRSP…SKRSSRSVED (138 aa)) is disordered. Position 7 is a phosphotyrosine (Tyr-7). 6 positions are modified to phosphoserine: Ser-9, Ser-49, Ser-51, Ser-67, Ser-76, and Ser-78. Basic and acidic residues-rich tracts occupy residues 26-56 (YSRE…DRIP) and 63-76 (EHRD…EERS). The segment covering 88 to 116 (RSRHRRRSRERAPYRTRKHAHHCHKRRTR) has biased composition (basic residues). The segment covering 117–130 (SCSSASSRSQQSSK) has biased composition (low complexity). The residue at position 135 (Ser-135) is a Phosphoserine. In terms of domain architecture, Protein kinase spans 156 to 472 (YEIVGNLGEG…LAEALLHPFF (317 aa)). Residues 162 to 170 (LGEGTFGKV) and Lys-186 each bind ATP. Asp-283 acts as the Proton acceptor in catalysis.

It belongs to the protein kinase superfamily. CMGC Ser/Thr protein kinase family. Lammer subfamily. Post-translationally, autophosphorylates on all three types of residues. In terms of tissue distribution, present at high levels in testis and ovary. In testis, expression is restricted to elongated, maturing spermatozoa. Also present in spleen, brain, lung and liver (at protein level).

The protein localises to the nucleus. The protein resides in the cytoplasm. It is found in the cytoplasmic vesicle. Its subcellular location is the secretory vesicle. It localises to the acrosome. The enzyme catalyses L-seryl-[protein] + ATP = O-phospho-L-seryl-[protein] + ADP + H(+). It catalyses the reaction L-threonyl-[protein] + ATP = O-phospho-L-threonyl-[protein] + ADP + H(+). The catalysed reaction is L-tyrosyl-[protein] + ATP = O-phospho-L-tyrosyl-[protein] + ADP + H(+). Leucettine L41 inhibits its kinase activity and affects the regulation of alternative splicing mediated by phosphorylation of SR proteins. Its function is as follows. Dual specificity kinase acting on both serine/threonine and tyrosine-containing substrates. Phosphorylates serine- and arginine-rich (SR) proteins of the spliceosomal complex. May be a constituent of a network of regulatory mechanisms that enable SR proteins to control RNA splicing and can cause redistribution of SR proteins from speckles to a diffuse nucleoplasmic distribution. Phosphorylates SRSF1 and SRSF3. Regulates the alternative splicing of tissue factor (F3) pre-mRNA in endothelial cells. The polypeptide is Dual specificity protein kinase CLK3 (Mus musculus (Mouse)).